A 121-amino-acid chain; its full sequence is Large ribosomal subunit protein bL19 (121 aa).

Belongs to the bacterial ribosomal protein bL19 family.

This protein is located at the 30S-50S ribosomal subunit interface and may play a role in the structure and function of the aminoacyl-tRNA binding site. This is Large ribosomal subunit protein bL19 (rplS) from Chlamydia pneumoniae (Chlamydophila pneumoniae).